The primary structure comprises 72 residues: MDNNYLDASHRKRLVCSNCNGTNTTLWRRKAEGDPVCNACGLYFKLHHVTRPIPMKKNKKHAVLPAPGISKL.

The segment at 16 to 40 (CSNCNGTNTTLWRRKAEGDPVCNAC) adopts a GATA-type zinc-finger fold.

It is found in the nucleus. In terms of biological role, probable transcription factor. Plays a role in regulating heme-dependent expression of heme transporter hrg-1. Modulates lifespan in a daf-16-dependent manner. The sequence is that of Probable transcription factor elt-4 from Caenorhabditis elegans.